Reading from the N-terminus, the 157-residue chain is Small ribosomal subunit protein uS7 (157 aa).

It belongs to the universal ribosomal protein uS7 family. Part of the 30S ribosomal subunit. Contacts proteins S9 and S11.

Its function is as follows. One of the primary rRNA binding proteins, it binds directly to 16S rRNA where it nucleates assembly of the head domain of the 30S subunit. Is located at the subunit interface close to the decoding center, probably blocks exit of the E-site tRNA. This chain is Small ribosomal subunit protein uS7, found in Borrelia garinii subsp. bavariensis (strain ATCC BAA-2496 / DSM 23469 / PBi) (Borreliella bavariensis).